The following is a 382-amino-acid chain: Deoxyhypusine synthase (382 aa).

NAD(+)-binding positions include Ser108–Ser112, Thr134–Gly136, Glu140, and Asp257. Residue Glu139 to Glu140 coordinates spermidine. Asp262 is a binding site for spermidine. Gly304 provides a ligand contact to NAD(+). Residue His309 participates in spermidine binding. Residue Thr329 to Gly330 coordinates NAD(+). Spermidine is bound by residues Gly335–Asp337 and Glu344–Lys350. Lys350 functions as the Nucleophile in the catalytic mechanism. An NAD(+)-binding site is contributed by Asp363–Val364.

Belongs to the deoxyhypusine synthase family. Requires NAD(+) as cofactor.

It catalyses the reaction [eIF5A protein]-L-lysine + spermidine = [eIF5A protein]-deoxyhypusine + propane-1,3-diamine. It participates in protein modification; eIF5A hypusination. In terms of biological role, catalyzes the NAD-dependent oxidative cleavage of spermidine and the subsequent transfer of the butylamine moiety of spermidine to the epsilon-amino group of a specific lysine residue of the eIF-5A precursor protein to form the intermediate deoxyhypusine residue. In Eremothecium gossypii (strain ATCC 10895 / CBS 109.51 / FGSC 9923 / NRRL Y-1056) (Yeast), this protein is Deoxyhypusine synthase (DYS1).